A 167-amino-acid polypeptide reads, in one-letter code: Peptidyl-prolyl cis-trans isomerase-like 3 (167 aa).

A PPIase cyclophilin-type domain is found at 1–160 (MSVTLHTSHG…EPVRIENVTI (160 aa)).

It belongs to the cyclophilin-type PPIase family. PPIL3 subfamily.

It carries out the reaction [protein]-peptidylproline (omega=180) = [protein]-peptidylproline (omega=0). In terms of biological role, PPIases accelerate the folding of proteins. It catalyzes the cis-trans isomerization of proline imidic peptide bonds in oligopeptides. The protein is Peptidyl-prolyl cis-trans isomerase-like 3 (CYP10) of Gibberella zeae (strain ATCC MYA-4620 / CBS 123657 / FGSC 9075 / NRRL 31084 / PH-1) (Wheat head blight fungus).